Consider the following 603-residue polypeptide: DNA mismatch repair protein MutL (603 aa).

The interval 361 to 383 is disordered; it reads KETPTLFSKPTIPEYVPSDEDAP.

This sequence belongs to the DNA mismatch repair MutL/HexB family.

This protein is involved in the repair of mismatches in DNA. It is required for dam-dependent methyl-directed DNA mismatch repair. May act as a 'molecular matchmaker', a protein that promotes the formation of a stable complex between two or more DNA-binding proteins in an ATP-dependent manner without itself being part of a final effector complex. The sequence is that of DNA mismatch repair protein MutL from Listeria monocytogenes serotype 4b (strain CLIP80459).